Reading from the N-terminus, the 126-residue chain is Small ribosomal subunit protein uS8 (126 aa).

It belongs to the universal ribosomal protein uS8 family. In terms of assembly, part of the 30S ribosomal subunit. Contacts proteins S5 and S12.

Functionally, one of the primary rRNA binding proteins, it binds directly to 16S rRNA central domain where it helps coordinate assembly of the platform of the 30S subunit. This is Small ribosomal subunit protein uS8 from Nitratidesulfovibrio vulgaris (strain DSM 19637 / Miyazaki F) (Desulfovibrio vulgaris).